The sequence spans 726 residues: Long-chain-alcohol oxidase FAO4A (726 aa).

A helical membrane pass occupies residues 103 to 119; it reads ILLNWSSSYFSLLRMLF. 224–239 contributes to the FAD binding site; sequence CDAVVVGSGSGGGVAA. His-659 serves as the catalytic Proton acceptor.

Belongs to the GMC oxidoreductase family.

The protein localises to the membrane. It carries out the reaction a long-chain primary fatty alcohol + O2 = a long-chain fatty aldehyde + H2O2. Long-chain fatty alcohol oxidase involved in the omega-oxidation pathway of lipid degradation. The protein is Long-chain-alcohol oxidase FAO4A (FAO4A) of Arabidopsis thaliana (Mouse-ear cress).